A 301-amino-acid polypeptide reads, in one-letter code: 1,5-anhydro-D-fructose reductase (301 aa).

Aspartate 35 contacts NADP(+). The active-site Proton donor is the tyrosine 40. Histidine 102 provides a ligand contact to substrate. Residues glutamine 175 and 246 to 258 (IPKSVTPSRIREN) each bind NADP(+).

Belongs to the aldo/keto reductase family. Monomer.

The protein resides in the cytoplasm. It catalyses the reaction 1,5-anhydro-D-glucitol + NADP(+) = 1,5-anhydro-D-fructose + NADPH + H(+). Its activity is regulated as follows. Inhibited by p-chloromercuribenzoic acid and alkyliodines. Catalyzes the NADPH-dependent reduction of 1,5-anhydro-D-fructose (AF) to 1,5-anhydro-D-glucitol. The polypeptide is 1,5-anhydro-D-fructose reductase (Akr1e2) (Mus musculus (Mouse)).